The following is a 540-amino-acid chain: Chaperonin GroEL 3 (540 aa).

ATP-binding positions include 30–33 (TLGP), Lys-51, 87–91 (DGTTT), Gly-415, 479–481 (NAA), and Asp-495.

This sequence belongs to the chaperonin (HSP60) family. Forms a cylinder of 14 subunits composed of two heptameric rings stacked back-to-back. Interacts with the co-chaperonin GroES.

It localises to the cytoplasm. The enzyme catalyses ATP + H2O + a folded polypeptide = ADP + phosphate + an unfolded polypeptide.. Functionally, together with its co-chaperonin GroES, plays an essential role in assisting protein folding. The GroEL-GroES system forms a nano-cage that allows encapsulation of the non-native substrate proteins and provides a physical environment optimized to promote and accelerate protein folding. The chain is Chaperonin GroEL 3 from Burkholderia ambifaria (strain ATCC BAA-244 / DSM 16087 / CCUG 44356 / LMG 19182 / AMMD) (Burkholderia cepacia (strain AMMD)).